Consider the following 65-residue polypeptide: Large ribosomal subunit protein bL35 (65 aa).

Belongs to the bacterial ribosomal protein bL35 family.

This chain is Large ribosomal subunit protein bL35, found in Synechococcus sp. (strain CC9311).